Consider the following 702-residue polypeptide: Phosphoglycerol transferase I (702 aa).

3 consecutive transmembrane segments (helical) span residues 5 to 24 (LLVSLLLLLWLLVASPRLAW), 73 to 95 (GYIAVFVGMLLLSLSPLLLVRIR), and 102 to 124 (GGGAVFAGFVGMLLVGIAASPLY).

The protein belongs to the OpgB family.

It is found in the cell inner membrane. The catalysed reaction is a phosphatidylglycerol + a membrane-derived-oligosaccharide D-glucose = a 1,2-diacyl-sn-glycerol + a membrane-derived-oligosaccharide 6-(glycerophospho)-D-glucose.. It participates in glycan metabolism; osmoregulated periplasmic glucan (OPG) biosynthesis. Transfers a phosphoglycerol residue from phosphatidylglycerol to the membrane-bound nascent glucan backbones. This Xanthomonas axonopodis pv. citri (strain 306) protein is Phosphoglycerol transferase I.